Here is a 696-residue protein sequence, read N- to C-terminus: uncharacterized protein (696 aa).

A GGDEF domain is found at 293-426 (SVLGLVLLGF…GSRQYCFYEE (134 aa)). One can recognise an EAL domain in the interval 435–689 (RIQLEHALHQ…EITAFLAEGN (255 aa)).

This is an uncharacterized protein from Synechocystis sp. (strain ATCC 27184 / PCC 6803 / Kazusa).